We begin with the raw amino-acid sequence, 273 residues long: Large ribosomal subunit protein uL2 (273 aa).

A disordered region spans residues 222–273 (GVAMNPVDHPMGGGEGRSSGGRHPCTPWGVPTKGYRTRKSKRSDKLIVHRRK). The segment covering 264-273 (SDKLIVHRRK) has biased composition (basic and acidic residues).

It belongs to the universal ribosomal protein uL2 family. In terms of assembly, part of the 50S ribosomal subunit. Forms a bridge to the 30S subunit in the 70S ribosome.

Functionally, one of the primary rRNA binding proteins. Required for association of the 30S and 50S subunits to form the 70S ribosome, for tRNA binding and peptide bond formation. It has been suggested to have peptidyltransferase activity; this is somewhat controversial. Makes several contacts with the 16S rRNA in the 70S ribosome. This Syntrophobacter fumaroxidans (strain DSM 10017 / MPOB) protein is Large ribosomal subunit protein uL2.